The chain runs to 729 residues: Phosphoribosylformylglycinamidine synthase subunit PurL (729 aa).

His-54 is an active-site residue. Tyr-57 and Lys-96 together coordinate ATP. Glu-98 is a binding site for Mg(2+). Residues 99–102 and Arg-121 each bind substrate; that span reads SHNH. His-100 functions as the Proton acceptor in the catalytic mechanism. Asp-122 is a binding site for Mg(2+). Gln-245 is a binding site for substrate. Position 273 (Asp-273) interacts with Mg(2+). 317–319 is a binding site for substrate; the sequence is ETQ. ATP-binding residues include Asp-495 and Gly-532. Asn-533 provides a ligand contact to Mg(2+). Ser-535 is a substrate binding site.

It belongs to the FGAMS family. Monomer. Part of the FGAM synthase complex composed of 1 PurL, 1 PurQ and 2 PurS subunits.

It localises to the cytoplasm. The enzyme catalyses N(2)-formyl-N(1)-(5-phospho-beta-D-ribosyl)glycinamide + L-glutamine + ATP + H2O = 2-formamido-N(1)-(5-O-phospho-beta-D-ribosyl)acetamidine + L-glutamate + ADP + phosphate + H(+). The protein operates within purine metabolism; IMP biosynthesis via de novo pathway; 5-amino-1-(5-phospho-D-ribosyl)imidazole from N(2)-formyl-N(1)-(5-phospho-D-ribosyl)glycinamide: step 1/2. Part of the phosphoribosylformylglycinamidine synthase complex involved in the purines biosynthetic pathway. Catalyzes the ATP-dependent conversion of formylglycinamide ribonucleotide (FGAR) and glutamine to yield formylglycinamidine ribonucleotide (FGAM) and glutamate. The FGAM synthase complex is composed of three subunits. PurQ produces an ammonia molecule by converting glutamine to glutamate. PurL transfers the ammonia molecule to FGAR to form FGAM in an ATP-dependent manner. PurS interacts with PurQ and PurL and is thought to assist in the transfer of the ammonia molecule from PurQ to PurL. This is Phosphoribosylformylglycinamidine synthase subunit PurL from Staphylococcus carnosus (strain TM300).